Reading from the N-terminus, the 253-residue chain is Leucyl/phenylalanyl-tRNA--protein transferase (253 aa).

The protein belongs to the L/F-transferase family.

The protein resides in the cytoplasm. It carries out the reaction N-terminal L-lysyl-[protein] + L-leucyl-tRNA(Leu) = N-terminal L-leucyl-L-lysyl-[protein] + tRNA(Leu) + H(+). The catalysed reaction is N-terminal L-arginyl-[protein] + L-leucyl-tRNA(Leu) = N-terminal L-leucyl-L-arginyl-[protein] + tRNA(Leu) + H(+). The enzyme catalyses L-phenylalanyl-tRNA(Phe) + an N-terminal L-alpha-aminoacyl-[protein] = an N-terminal L-phenylalanyl-L-alpha-aminoacyl-[protein] + tRNA(Phe). Its function is as follows. Functions in the N-end rule pathway of protein degradation where it conjugates Leu, Phe and, less efficiently, Met from aminoacyl-tRNAs to the N-termini of proteins containing an N-terminal arginine or lysine. The sequence is that of Leucyl/phenylalanyl-tRNA--protein transferase from Bordetella petrii (strain ATCC BAA-461 / DSM 12804 / CCUG 43448).